A 157-amino-acid polypeptide reads, in one-letter code: UPF0251 protein CLM_1546 (157 aa).

It belongs to the UPF0251 family.

In Clostridium botulinum (strain Kyoto / Type A2), this protein is UPF0251 protein CLM_1546.